A 353-amino-acid polypeptide reads, in one-letter code: Uroporphyrinogen decarboxylase (353 aa).

Residues 30–34 (RQAGR), aspartate 79, tyrosine 154, serine 209, and histidine 332 each bind substrate.

It belongs to the uroporphyrinogen decarboxylase family. Homodimer.

It is found in the cytoplasm. The enzyme catalyses uroporphyrinogen III + 4 H(+) = coproporphyrinogen III + 4 CO2. The protein operates within porphyrin-containing compound metabolism; protoporphyrin-IX biosynthesis; coproporphyrinogen-III from 5-aminolevulinate: step 4/4. Its function is as follows. Catalyzes the decarboxylation of four acetate groups of uroporphyrinogen-III to yield coproporphyrinogen-III. This is Uroporphyrinogen decarboxylase from Mycolicibacterium smegmatis (strain ATCC 700084 / mc(2)155) (Mycobacterium smegmatis).